The following is a 134-amino-acid chain: Small ribosomal subunit protein uS11 (134 aa).

Belongs to the universal ribosomal protein uS11 family. In terms of assembly, part of the 30S ribosomal subunit. Interacts with proteins S7 and S18. Binds to IF-3.

In terms of biological role, located on the platform of the 30S subunit, it bridges several disparate RNA helices of the 16S rRNA. Forms part of the Shine-Dalgarno cleft in the 70S ribosome. The chain is Small ribosomal subunit protein uS11 from Parafrankia sp. (strain EAN1pec).